Reading from the N-terminus, the 484-residue chain is Dolichyl-P-Man:Man5GlcNAc2-PP-dolichol alpha-1,3-mannosyltransferase l(2)not2 (484 aa).

The Cytoplasmic segment spans residues 1–43 (MAPPKAASHRPAVRRKKSGTLVDSILDKYLNVRFFKYLLLEPA). The helical transmembrane segment at 44-64 (ALPIVGLFVLLAELVINVVVI) threads the bilayer. At 65 to 97 (QRVPYTEIDWVAYMQECEGFLNGTTNYSLLRGD) the chain is on the lumenal side. Residues 98–118 (TGPLVYPAAFVYIYSALYYVT) form a helical membrane-spanning segment. The Cytoplasmic segment spans residues 119 to 125 (SHGTNVR). The chain crosses the membrane as a helical span at residues 126–146 (LAQYIFAGIYLLQLALVLRLY). At 147–171 (SKSRKVPPYVLVLSAFTSYRIHSIY) the chain is on the lumenal side. Residues 172-192 (VLRLFNDPVAVLLLYAALNLF) form a helical membrane-spanning segment. Residues 193–211 (LDRRWTLGSTFFSLAVGVK) are Cytoplasmic-facing. Residues 212–232 (MNILLFAPALLLFYLANLGLL) traverse the membrane as a helical segment. A topological domain (lumenal) is located at residue arginine 233. The chain crosses the membrane as a helical span at residues 234-254 (TILQLAVCGVIQLLLGAPFLL). At 255 to 294 (THPVEYLRGSFDLGRIFEHKWTVNYRFLSRDVFENRTFHV) the chain is on the cytoplasmic side. A helical transmembrane segment spans residues 295–315 (SLLGLHLLLLLAFAKPTWTFF). Topologically, residues 316-403 (QSYVRLRRIE…YGIHFDRCTQ (88 aa)) are lumenal. The chain crosses the membrane as a helical span at residues 404–424 (LALLPFFLCNLVGVACSRSLH). Residues 425-426 (YQ) lie on the Cytoplasmic side of the membrane. Residues 427–447 (FYVWYFHSLPYLAWSTPYSLG) form a helical membrane-spanning segment. The Lumenal segment spans residues 448–484 (VRCLILGLIEYCWNTYPSTNFSSAALHFTHIIPPYQL).

The protein belongs to the glycosyltransferase ALG3 family.

It is found in the endoplasmic reticulum membrane. The catalysed reaction is an alpha-D-Man-(1-&gt;2)-alpha-D-Man-(1-&gt;2)-alpha-D-Man-(1-&gt;3)-[alpha-D-Man-(1-&gt;6)]-beta-D-Man-(1-&gt;4)-beta-D-GlcNAc-(1-&gt;4)-alpha-D-GlcNAc-diphospho-di-trans,poly-cis-dolichol + a di-trans,poly-cis-dolichyl beta-D-mannosyl phosphate = an alpha-D-Man-(1-&gt;2)-alpha-D-Man-(1-&gt;2)-alpha-D-Man-(1-&gt;3)-[alpha-D-Man-(1-&gt;3)-alpha-D-Man-(1-&gt;6)]-beta-D-Man-(1-&gt;4)-beta-D-GlcNAc-(1-&gt;4)-alpha-D-GlcNAc-diphospho-di-trans,poly-cis-dolichol + a di-trans,poly-cis-dolichyl phosphate + H(+). The protein operates within protein modification; protein glycosylation. Probable alpha-1,3-mannosyltransferase involved in the N-glycosylation pathway. Involved in glycosylation of the TNF receptor grnd, regulating its ligand affinity. Required for normal epithelial growth and architecture. Suppressor of JNK-dependent intestinal stem cell proliferation. This is Dolichyl-P-Man:Man5GlcNAc2-PP-dolichol alpha-1,3-mannosyltransferase l(2)not2 from Drosophila melanogaster (Fruit fly).